The chain runs to 261 residues: Acetylglutamate kinase (261 aa).

Substrate is bound by residues 46–47, Arg68, and Asn160; that span reads GG.

This sequence belongs to the acetylglutamate kinase family. ArgB subfamily.

It is found in the cytoplasm. It carries out the reaction N-acetyl-L-glutamate + ATP = N-acetyl-L-glutamyl 5-phosphate + ADP. It participates in amino-acid biosynthesis; L-arginine biosynthesis; N(2)-acetyl-L-ornithine from L-glutamate: step 2/4. Its function is as follows. Catalyzes the ATP-dependent phosphorylation of N-acetyl-L-glutamate. The chain is Acetylglutamate kinase from Shewanella loihica (strain ATCC BAA-1088 / PV-4).